Here is a 149-residue protein sequence, read N- to C-terminus: Calmodulin (149 aa).

Position 2 is an N-acetylalanine (alanine 2). 4 consecutive EF-hand domains span residues 8–43 (EQIA…VGQN), 44–79 (PTEA…KMKD), 81–116 (DSEE…LGEK), and 117–149 (LTDE…MMSK). Ca(2+) contacts are provided by aspartate 21, aspartate 23, aspartate 25, threonine 27, glutamate 32, aspartate 57, aspartate 59, asparagine 61, threonine 63, glutamate 68, aspartate 94, aspartate 96, asparagine 98, glutamate 105, aspartate 130, aspartate 132, aspartate 134, glutamine 136, and glutamate 141.

The protein belongs to the calmodulin family.

Calmodulin mediates the control of a large number of enzymes, ion channels and other proteins by Ca(2+). Among the enzymes to be stimulated by the calmodulin-Ca(2+) complex are a number of protein kinases and phosphatases. The sequence is that of Calmodulin (CMD1) from Achlya klebsiana.